The primary structure comprises 201 residues: Recombination protein RecR (201 aa).

The C4-type zinc-finger motif lies at 60 to 75 (CRSCGNVDTSDPCTIC). Residues 83 to 178 (TTLVVVEDVS…TVTRLAHGVP (96 aa)) form the Toprim domain.

This sequence belongs to the RecR family.

Functionally, may play a role in DNA repair. It seems to be involved in an RecBC-independent recombinational process of DNA repair. It may act with RecF and RecO. The chain is Recombination protein RecR from Methylorubrum extorquens (strain CM4 / NCIMB 13688) (Methylobacterium extorquens).